Consider the following 168-residue polypeptide: Ubiquitin-fold modifier-conjugating enzyme 1 (168 aa).

Cys-116 serves as the catalytic Glycyl thioester intermediate.

This sequence belongs to the ubiquitin-conjugating enzyme family. UFC1 subfamily.

Its function is as follows. E2-like enzyme which forms an intermediate with UFM1 via a thioester linkage. The sequence is that of Ubiquitin-fold modifier-conjugating enzyme 1 from Trichoplax adhaerens (Trichoplax reptans).